Reading from the N-terminus, the 1040-residue chain is DNA cross-link repair 1A protein (1040 aa).

A nuclear localization region region spans residues 1 to 190 (MLEDISEEDI…RAGDHPFSSP (190 aa)). The tract at residues 15 to 76 (SKRKPKRVDP…LGNAGCQTSV (62 aa)) is disordered. Over residues 53 to 65 (RAAEAKEVKDHEV) the composition is skewed to basic and acidic residues. The segment at 119–149 (DGYCPNCQMPFSSLIGQTPRWHVFECLDSPP) adopts a UBZ4-type zinc-finger fold. 4 residues coordinate Zn(2+): C122, C125, H140, and C144. Glycyl lysine isopeptide (Lys-Gly) (interchain with G-Cter in SUMO2) cross-links involve residues K202, K236, K269, K353, K361, K429, K488, K508, K517, K533, and K536. The nuclear focus formation stretch occupies residues 396-614 (LPYDLACTGG…KSLSDLEFDA (219 aa)). 2 disordered regions span residues 582 to 602 (GINL…CKRK) and 623 to 651 (SVEL…ACQK). At S590 the chain carries Phosphoserine. Glycyl lysine isopeptide (Lys-Gly) (interchain with G-Cter in SUMO2) cross-links involve residues K668, K670, and K674.

It belongs to the DNA repair metallo-beta-lactamase (DRMBL) family. Binds constitutively to TP53BP1. Binds CDC27, which is itself a component of the anaphase promoting complex (APC). Binds PIAS1. As to expression, expressed in brain, heart, kidney, liver, pancreas, placenta and skeletal muscle.

The protein localises to the nucleus. It carries out the reaction a beta-lactam + H2O = a substituted beta-amino acid. Beta-lactamase activity is inhibited by sulbactam. May be required for DNA interstrand cross-link repair. Also required for checkpoint mediated cell cycle arrest in early prophase in response to mitotic spindle poisons. Possesses beta-lactamase activity, catalyzing the hydrolysis of penicillin G and nitrocefin. Exhibits no activity towards other beta-lactam antibiotic classes including cephalosporins (cefotaxime) and carbapenems (imipenem). The protein is DNA cross-link repair 1A protein (DCLRE1A) of Homo sapiens (Human).